The sequence spans 90 residues: Small ribosomal subunit protein bS16 (90 aa).

It belongs to the bacterial ribosomal protein bS16 family.

In Anoxybacillus flavithermus (strain DSM 21510 / WK1), this protein is Small ribosomal subunit protein bS16.